The sequence spans 180 residues: Type-1 fimbrial protein subunit (180 aa).

An N-terminal signal peptide occupies residues 1–22 (MKKVLLPLAALVLSATASNAMA). The cysteines at positions 38 and 78 are disulfide-linked.

Belongs to the fimbrial protein family.

It localises to the fimbrium. Fimbriae (also called pili), polar filaments radiating from the surface of the bacterium to a length of 0.5-1.5 micrometers and numbering 100-300 per cell, enable bacteria to colonize the epithelium of specific host organs. The sequence is that of Type-1 fimbrial protein subunit (fimA) from Serratia marcescens.